The primary structure comprises 72 residues: MAKEEAIEVEGKVVEPLPNAMFRVKLDNGHTILAHISGKMRKFYIRILPGDRVTVELSPYDLTRGRITYREK.

Residues 1 to 72 (MAKEEAIEVE…TRGRITYREK (72 aa)) form the S1-like domain.

The protein belongs to the IF-1 family. As to quaternary structure, component of the 30S ribosomal translation pre-initiation complex which assembles on the 30S ribosome in the order IF-2 and IF-3, IF-1 and N-formylmethionyl-tRNA(fMet); mRNA recruitment can occur at any time during PIC assembly.

Its subcellular location is the cytoplasm. Functionally, one of the essential components for the initiation of protein synthesis. Stabilizes the binding of IF-2 and IF-3 on the 30S subunit to which N-formylmethionyl-tRNA(fMet) subsequently binds. Helps modulate mRNA selection, yielding the 30S pre-initiation complex (PIC). Upon addition of the 50S ribosomal subunit IF-1, IF-2 and IF-3 are released leaving the mature 70S translation initiation complex. The protein is Translation initiation factor IF-1 of Syntrophotalea carbinolica (strain DSM 2380 / NBRC 103641 / GraBd1) (Pelobacter carbinolicus).